A 402-amino-acid polypeptide reads, in one-letter code: 1-deoxy-D-xylulose 5-phosphate reductoisomerase (402 aa).

The NADPH site is built by threonine 13, glycine 14, serine 15, isoleucine 16, and asparagine 126. Lysine 127 provides a ligand contact to 1-deoxy-D-xylulose 5-phosphate. Glutamate 128 provides a ligand contact to NADPH. A Mn(2+)-binding site is contributed by aspartate 152. 4 residues coordinate 1-deoxy-D-xylulose 5-phosphate: serine 153, glutamate 154, serine 188, and histidine 211. A Mn(2+)-binding site is contributed by glutamate 154. Glycine 217 contributes to the NADPH binding site. 1-deoxy-D-xylulose 5-phosphate is bound by residues serine 224, asparagine 229, lysine 230, and glutamate 233. Residue glutamate 233 participates in Mn(2+) binding.

The protein belongs to the DXR family. Mg(2+) serves as cofactor. Requires Mn(2+) as cofactor.

The enzyme catalyses 2-C-methyl-D-erythritol 4-phosphate + NADP(+) = 1-deoxy-D-xylulose 5-phosphate + NADPH + H(+). The protein operates within isoprenoid biosynthesis; isopentenyl diphosphate biosynthesis via DXP pathway; isopentenyl diphosphate from 1-deoxy-D-xylulose 5-phosphate: step 1/6. Catalyzes the NADPH-dependent rearrangement and reduction of 1-deoxy-D-xylulose-5-phosphate (DXP) to 2-C-methyl-D-erythritol 4-phosphate (MEP). The chain is 1-deoxy-D-xylulose 5-phosphate reductoisomerase from Psychrobacter arcticus (strain DSM 17307 / VKM B-2377 / 273-4).